Consider the following 444-residue polypeptide: Phosphoribosylamine--glycine ligase (444 aa).

One can recognise an ATP-grasp domain in the interval 109–324 (RNLFKKYEID…FLDVCFAIAE (216 aa)). 140-202 (MTSLGKDVVV…EEKLVGVEFT (63 aa)) is an ATP binding site. Mg(2+) is bound by residues Gln282, Glu294, and Asn296. Gln282, Glu294, and Asn296 together coordinate Mn(2+).

Belongs to the GARS family. Mg(2+) is required as a cofactor. The cofactor is Mn(2+).

It carries out the reaction 5-phospho-beta-D-ribosylamine + glycine + ATP = N(1)-(5-phospho-beta-D-ribosyl)glycinamide + ADP + phosphate + H(+). It participates in purine metabolism; IMP biosynthesis via de novo pathway; N(1)-(5-phospho-D-ribosyl)glycinamide from 5-phospho-alpha-D-ribose 1-diphosphate: step 2/2. The sequence is that of Phosphoribosylamine--glycine ligase from Methanococcus maripaludis (strain C7 / ATCC BAA-1331).